The following is a 115-amino-acid chain: Synaptobrevin homolog 2 (115 aa).

Low complexity predominate over residues 1–16 (MSSSVPYDPYVPPEES). Positions 1–28 (MSSSVPYDPYVPPEESNSGANPNSQNKT) are disordered. The Cytoplasmic segment spans residues 1–93 (MSSSVPYDPY…MWWKDLKMRM (93 aa)). The span at 17–28 (NSGANPNSQNKT) shows a compositional bias: polar residues. One can recognise a v-SNARE coiled-coil homology domain in the interval 27–87 (KTAALRQEID…NRVRKQMWWK (61 aa)). Ser58 carries the post-translational modification Phosphoserine. A Glycyl lysine isopeptide (Lys-Gly) (interchain with G-Cter in ubiquitin) cross-link involves residue Lys62. Cys94 carries S-palmitoyl cysteine lipidation. The chain crosses the membrane as a helical; Anchor for type IV membrane protein span at residues 94–112 (CLFLVVIILLVVIIVPIVV). The Vesicular segment spans residues 113–115 (HFS).

It belongs to the synaptobrevin family. In terms of processing, palmitoylated by SWF1.

It localises to the endomembrane system. In terms of biological role, SNC1 and SNC2 are vesicle-targeting proteins essential for normal secretory traffic between the Golgi and the plasma membrane. They may also be involved in vesicle fusion. This is Synaptobrevin homolog 2 (SNC2) from Saccharomyces cerevisiae (strain ATCC 204508 / S288c) (Baker's yeast).